Here is a 325-residue protein sequence, read N- to C-terminus: Flavin-dependent thymidylate synthase (325 aa).

In terms of domain architecture, ThyX spans 12–267 (ISVRLLEYTG…PRLFRWAGPS (256 aa)). FAD-binding positions include Ser65, 89 to 91 (RHR), and Gln97. DUMP contacts are provided by residues 86–89 (QLVR) and 97–101 (QLSHR). Residues 89–99 (RHRVASYTQLS) carry the ThyX motif motif. The tract at residues 110-159 (AALKACESIGLDCPSKPAETEGGRKAAYRLYSQALERAARDFGASERFAI) is insert. Position 205 (Arg205) interacts with dUMP. 221-223 (NAR) contacts FAD. Arg233 serves as a coordination point for dUMP. Arg233 acts as the Involved in ionization of N3 of dUMP, leading to its activation in catalysis.

This sequence belongs to the thymidylate synthase ThyX family. As to quaternary structure, homotetramer. The cofactor is FAD.

It carries out the reaction dUMP + (6R)-5,10-methylene-5,6,7,8-tetrahydrofolate + NADPH + H(+) = dTMP + (6S)-5,6,7,8-tetrahydrofolate + NADP(+). It participates in pyrimidine metabolism; dTTP biosynthesis. Catalyzes the reductive methylation of 2'-deoxyuridine-5'-monophosphate (dUMP) to 2'-deoxythymidine-5'-monophosphate (dTMP) while utilizing 5,10-methylenetetrahydrofolate (mTHF) as the methyl donor, and NADPH and FADH(2) as the reductant. The chain is Flavin-dependent thymidylate synthase from Aeropyrum pernix (strain ATCC 700893 / DSM 11879 / JCM 9820 / NBRC 100138 / K1).